A 284-amino-acid chain; its full sequence is Ermin (284 aa).

The segment at 1 to 23 (MTDVPATFTQAECNGDKPPENGQ) is disordered. Ser-73 carries the post-translational modification Phosphoserine. The segment at 110–251 (REGHQWEKIP…PTLGKKSDIS (142 aa)) is disordered. 2 stretches are compositionally biased toward basic and acidic residues: residues 126–140 (EIRR…QPLK) and 171–183 (LHSK…KVWD). Acidic residues predominate over residues 184-200 (EEIDDDDDDNCNNDEDE). A compositionally biased stretch (basic and acidic residues) spans 201-220 (VRVIEFKKKHEEVSQFKEEG). Ser-214, Ser-226, Ser-230, and Ser-233 each carry phosphoserine. Over residues 225-235 (DSPLSSASSQA) the composition is skewed to low complexity. The residue at position 237 (Thr-237) is a Phosphothreonine. The binds actin stretch occupies residues 265-284 (KIRKGNTKQRIDEFESMMHL).

As to quaternary structure, binds actin. Highly expressed in adult and fetal brain. Expressed at intermediate levels in the lung and liver.

The protein resides in the cytoplasm. It localises to the cytoskeleton. Functionally, plays a role in cytoskeletal rearrangements during the late wrapping and/or compaction phases of myelinogenesis as well as in maintenance and stability of myelin sheath in the adult. May play an important role in late-stage oligodendroglia maturation, myelin/Ranvier node formation during CNS development, and in the maintenance and plasticity of related structures in the mature CNS. This chain is Ermin (ERMN), found in Homo sapiens (Human).